We begin with the raw amino-acid sequence, 731 residues long: Pre-B-cell leukemia transcription factor-interacting protein 1 (731 aa).

Residues 1–10 (MASCPDSDNS) are compositionally biased toward polar residues. The segment at 1–155 (MASCPDSDNS…SSSDDDTDVD (155 aa)) is disordered. Phosphoserine is present on serine 43. 2 stretches are compositionally biased toward polar residues: residues 62-75 (LFQT…SILT) and 121-132 (LEGQSPPQSLPS). A phosphoserine mark is found at serine 129, serine 146, serine 147, and serine 148. Threonine 152 is subject to Phosphothreonine. Residues 270-348 (LLLDKLAKEN…QGLEADCVRG (79 aa)) adopt a coiled-coil conformation. Disordered regions lie at residues 354 to 377 (LSGG…QEPE), 447 to 572 (GQDP…DPLP), and 698 to 731 (LKKR…HHRG). The segment covering 364–375 (KAIREQGPREQE) has biased composition (basic and acidic residues). A coiled-coil region spans residues 377-417 (ELSFLKQKEQLEAEAQALRQELERQRRLLGSVQQDLERSLQ). Basic and acidic residues-rich tracts occupy residues 472–499 (WSGK…ESGR), 508–543 (QEDR…EPPR), and 551–569 (SGEK…DSHD). Residues 485–505 (RKAEHWKHKKEESGRERKKNW) carry the Nuclear localization signal motif. Serine 567 bears the Phosphoserine mark. The Nuclear localization signal motif lies at 695 to 720 (DKALKKRSGKKDKHSQSPRAAGPREG). Positions 698–707 (LKKRSGKKDK) are enriched in basic residues.

In terms of assembly, interacts with TEX11. Interacts with ESR1, PBX1, PBX2 and PBX3. In terms of tissue distribution, expressed in early hematopoietic precursors.

The protein resides in the cytoplasm. Its subcellular location is the cytoskeleton. It localises to the nucleus. Functionally, regulator of pre-B-cell leukemia transcription factors (BPXs) function. Inhibits the binding of PBX1-HOX complex to DNA and blocks the transcriptional activity of E2A-PBX1. Tethers estrogen receptor-alpha (ESR1) to microtubules and allows them to influence estrogen receptors-alpha signaling. In Homo sapiens (Human), this protein is Pre-B-cell leukemia transcription factor-interacting protein 1 (PBXIP1).